Reading from the N-terminus, the 591-residue chain is Probable acetolactate synthase large subunit (591 aa).

Thiamine diphosphate is bound at residue E47. FAD contacts are provided by residues R149, 258-279 (HGTK…IGCR), and 301-320 (DIDP…IVGD). The tract at residues 396–476 (QNQMWMAHFF…VVICIFDNRT (81 aa)) is thiamine pyrophosphate binding. Mg(2+)-binding residues include D447 and N474.

This sequence belongs to the TPP enzyme family. As to quaternary structure, dimer of large and small chains. It depends on Mg(2+) as a cofactor. The cofactor is thiamine diphosphate.

The catalysed reaction is 2 pyruvate + H(+) = (2S)-2-acetolactate + CO2. Its pathway is amino-acid biosynthesis; L-isoleucine biosynthesis; L-isoleucine from 2-oxobutanoate: step 1/4. The protein operates within amino-acid biosynthesis; L-valine biosynthesis; L-valine from pyruvate: step 1/4. In Methanocaldococcus jannaschii (strain ATCC 43067 / DSM 2661 / JAL-1 / JCM 10045 / NBRC 100440) (Methanococcus jannaschii), this protein is Probable acetolactate synthase large subunit (ilvB).